A 194-amino-acid chain; its full sequence is Imidazoleglycerol-phosphate dehydratase (194 aa).

This sequence belongs to the imidazoleglycerol-phosphate dehydratase family.

The protein localises to the cytoplasm. The catalysed reaction is D-erythro-1-(imidazol-4-yl)glycerol 3-phosphate = 3-(imidazol-4-yl)-2-oxopropyl phosphate + H2O. The protein operates within amino-acid biosynthesis; L-histidine biosynthesis; L-histidine from 5-phospho-alpha-D-ribose 1-diphosphate: step 6/9. The polypeptide is Imidazoleglycerol-phosphate dehydratase (Bacillus cereus (strain ZK / E33L)).